Consider the following 180-residue polypeptide: ATP-dependent protease subunit HslV (180 aa).

Residue threonine 8 is part of the active site. Na(+) contacts are provided by serine 165, cysteine 168, and threonine 171.

It belongs to the peptidase T1B family. HslV subfamily. A double ring-shaped homohexamer of HslV is capped on each side by a ring-shaped HslU homohexamer. The assembly of the HslU/HslV complex is dependent on binding of ATP.

The protein localises to the cytoplasm. The enzyme catalyses ATP-dependent cleavage of peptide bonds with broad specificity.. Its activity is regulated as follows. Allosterically activated by HslU binding. In terms of biological role, protease subunit of a proteasome-like degradation complex believed to be a general protein degrading machinery. This Staphylococcus saprophyticus subsp. saprophyticus (strain ATCC 15305 / DSM 20229 / NCIMB 8711 / NCTC 7292 / S-41) protein is ATP-dependent protease subunit HslV.